A 155-amino-acid polypeptide reads, in one-letter code: uncharacterized protein (155 aa).

4 helical membrane passes run 25 to 45, 50 to 70, 91 to 111, and 118 to 138; these read LPMG…FGWT, IFWF…IMTS, GVKI…ESLF, and WGCT…PILF.

It belongs to the major facilitator superfamily. CAR1 family.

The protein localises to the membrane. This is an uncharacterized protein from Schizosaccharomyces pombe (strain 972 / ATCC 24843) (Fission yeast).